The sequence spans 90 residues: MRRSVLVVFLVLAVTNVAVEAISRRGSFLAGGLLGLGLGAAASRGFGFPGYYGGYYGGGYYPMGGYYPMGGYYPMGGFYPSYHTFGGYYG.

An N-terminal signal peptide occupies residues 1-21; the sequence is MRRSVLVVFLVLAVTNVAVEA.

In terms of tissue distribution, prismatic layer of shell (at protein level).

It is found in the secreted. The chain is Glycine and tyrosine-rich protein from Pinctada maxima (Silver-lipped pearl oyster).